A 362-amino-acid chain; its full sequence is Chorismate synthase (362 aa).

Residue R47 coordinates NADP(+). FMN contacts are provided by residues 124 to 126 (RSS), G286, 301 to 305 (KPTAT), and R327.

Belongs to the chorismate synthase family. In terms of assembly, homotetramer. The cofactor is FMNH2.

The enzyme catalyses 5-O-(1-carboxyvinyl)-3-phosphoshikimate = chorismate + phosphate. It participates in metabolic intermediate biosynthesis; chorismate biosynthesis; chorismate from D-erythrose 4-phosphate and phosphoenolpyruvate: step 7/7. In terms of biological role, catalyzes the anti-1,4-elimination of the C-3 phosphate and the C-6 proR hydrogen from 5-enolpyruvylshikimate-3-phosphate (EPSP) to yield chorismate, which is the branch point compound that serves as the starting substrate for the three terminal pathways of aromatic amino acid biosynthesis. This reaction introduces a second double bond into the aromatic ring system. This chain is Chorismate synthase, found in Trichormus variabilis (strain ATCC 29413 / PCC 7937) (Anabaena variabilis).